Consider the following 351-residue polypeptide: Bifunctional UDP-glucose 4-epimerase and UDP-xylose 4-epimerase 3 (351 aa).

An NAD(+)-binding site is contributed by 8-39 (NILVTGGAGFIGTHTVVQLLNQGFKVTIIDNL). A substrate-binding site is contributed by serine 134. The Proton acceptor role is filled by tyrosine 158.

The protein belongs to the NAD(P)-dependent epimerase/dehydratase family. Homodimer. Heterodimer. The cofactor is NAD(+). As to expression, ubiquitous.

The enzyme catalyses UDP-alpha-D-glucose = UDP-alpha-D-galactose. It carries out the reaction UDP-beta-L-arabinopyranose = UDP-alpha-D-xylose. It participates in carbohydrate metabolism; galactose metabolism. The protein operates within nucleotide-sugar biosynthesis; UDP-L-arabinose biosynthesis; UDP-L-arabinose from UDP-alpha-D-xylose: step 1/1. Its pathway is cell wall biogenesis; cell wall polysaccharide biosynthesis. With respect to regulation, strongly inhibited by UDP. Its function is as follows. Catalyzes the interconversion between UDP-glucose and UDP-galactose and the interconversion between UDP-arabinose and UDP-xylose. Cooperates with UGE2 in pollen development. May preferentially act in the UDP-galactose to UDP-glucose direction, therefore displaying a role in carbohydrate catabolism. In Arabidopsis thaliana (Mouse-ear cress), this protein is Bifunctional UDP-glucose 4-epimerase and UDP-xylose 4-epimerase 3 (UGE3).